Here is a 229-residue protein sequence, read N- to C-terminus: Coiled-coil domain-containing protein 134 (229 aa).

Positions 1–22 (MDLLQFLAFLFVLLLSGMGATG) are cleaved as a signal peptide. Position 148 (asparagine 148) is a short sequence motif, prevents secretion from ER. N-linked (GlcNAc...) asparagine glycosylation is present at asparagine 148. The segment at 193–229 (TDPFQKALREEEKRRKKEEKRKEIRKGPRISRSQSEL) is disordered. Residues 196-218 (FQKALREEEKRRKKEEKRKEIRK) are a coiled coil. The Nuclear localization signal motif lies at 206–213 (RRKKEEKR).

It belongs to the CCDC134 family. As to quaternary structure, interacts with TADA2A. Associates with the PCAF complex via TADA2A binding. O-glycosylated, with additional sialic acid modifications. In terms of tissue distribution, expressed in cervical gland, cervical squamous epithelium, endometrium, stomach, kidney distal convoluted tubule, spermatogenic cells in testis, mammary gland, liver and striated muscle (at protein level). Also detected in placenta. Highest expression in testis relative to other tissues. Detected in T cells and dendritic cells; highly expressed in activated CD8(+) T cells, and also expressed at lower levels in CD4(+) T cells.

Its subcellular location is the endoplasmic reticulum lumen. It is found in the secreted. The protein resides in the cytoplasm. It localises to the nucleus. In terms of biological role, molecular adapter required to prevent protein hyperglycosylation of HSP90B1: during translation, associates with nascent HSP90B1 and the STT3A catalytic component of the OST-A complex and tethers them to a specialized translocon that forms a microenvironment for HSP90B1 folding. In the CCDC134-containing translocon, STT3A associates with the SRT pseudosubstrate motif of HSP90B1, preventing access to facultative glycosylation sites until folding is completed, preventing hyperglycosylation and subsequent degradation of HSP90B1. In extracellular secreted form, promotes proliferation and activation of CD8(+) T-cells, suggesting a cytokine-like function. May inhibit ERK and JNK signaling activity. May suppress cell migration and invasion activity, via its effects on ERK and JNK signaling. May also localize in the nucleus: enhances stability of the PCAF histone acetyltransferase (HAT) complex member TADA2A and thus promotes PCAF-mediated histone acetyltransferase activity. Has a critical role in the regulation of osteogenesis and bone development. The chain is Coiled-coil domain-containing protein 134 from Homo sapiens (Human).